Consider the following 294-residue polypeptide: Tetraspanin-15 (294 aa).

Over 1–23 the chain is Cytoplasmic; the sequence is MPRGDSEQVRYCARFSYLWLKFS. The chain crosses the membrane as a helical span at residues 24–44; the sequence is LIIYSTVFWLIGALVLSVGIY. Topologically, residues 45–62 are extracellular; it reads AEVERQKYKTLESAFLAP. The helical transmembrane segment at 63–83 threads the bilayer; it reads AIILILLGVVMFMVSFIGVLA. Residues 84-93 are Cytoplasmic-facing; that stretch reads SLRDNLYLLQ. Residues 94 to 114 form a helical membrane-spanning segment; sequence AFMYILGICLIMELIGGVVAL. Residues 115–235 are Extracellular-facing; that stretch reads TFRNQTIDFL…WFMDNYTIMA (121 aa). Residue Asn118 is glycosylated (N-linked (GlcNAc...) asparagine). Disulfide bonds link Cys154–Cys219, Cys155–Cys185, Cys171–Cys179, and Cys186–Cys198. Asn189 and Asn230 each carry an N-linked (GlcNAc...) asparagine glycan. The chain crosses the membrane as a helical span at residues 236-256; it reads GILLGILLPQFLGVLLTLLYI. Residues 257-294 are Cytoplasmic-facing; that stretch reads TRVEDIIMEHSVTDGLLGPGAKPSVEAAGTGCCLCYPN.

The protein belongs to the tetraspanin (TM4SF) family. As to quaternary structure, interacts with ADAM10; the interaction influences ADAM10 substrate specificity, endocytosis and turnover. Palmitoylated.

The protein resides in the cell membrane. Its subcellular location is the late endosome membrane. Functionally, part of TspanC8 subgroup, composed of 6 members that interact with the transmembrane metalloprotease ADAM10. This interaction is required for ADAM10 exit from the endoplasmic reticulum and for enzymatic maturation and trafficking to the cell surface as well as substrate specificity. Different TspanC8/ADAM10 complexes have distinct substrates. Promotes ADAM10-mediated cleavage of CDH2. Negatively regulates ligand-induced Notch activity probably by regulating ADAM10 activity. This Homo sapiens (Human) protein is Tetraspanin-15.